An 80-amino-acid chain; its full sequence is OMEGA-myrmeciitoxin(02)-Mg1a (80 aa).

The signal sequence occupies residues 1–30 (MKNNYISTCIVYLMAALLLISVISIKECTA). The EGF-like domain maps to 35-75 (YGDPCSDDLKDYCIHGDCFFLKELNQPACRCYTGYYGSRCE). 3 cysteine pairs are disulfide-bonded: C39/C52, C47/C63, and C65/C74.

Belongs to the EGF domain peptide family. In terms of tissue distribution, expressed by the venom gland.

Its subcellular location is the secreted. In terms of biological role, ant peptide with probable defensive activity which acts as a potent agonist of the mammalian epidermal growth factor receptor (EGFR) (EC(50)=6.3 nM). Mimics, both structurally and functionally, vertebrate epidermal growth factor (EGF) peptide hormones. In vivo, intraplantar injection in mice causes long-lasting (several days) hypersensitivity of the injected paw to both mechanical and thermal stimuli. Its long-lasting effect is unusual for venom toxins whose effects are usually immediate. One possible explanation is that it would reduce the duration of a nest attack, discourage future attacks, or enhance the actions of subsequent exposure to other pain-inducing venom peptides. The polypeptide is OMEGA-myrmeciitoxin(02)-Mg1a (Myrmecia gulosa (Red bulldog ant)).